The following is a 206-amino-acid chain: LexA repressor (206 aa).

Residues 28–48 (VREIGEAVGLASSSTVHGHLA) constitute a DNA-binding region (H-T-H motif). Active-site for autocatalytic cleavage activity residues include serine 128 and lysine 166.

Belongs to the peptidase S24 family. As to quaternary structure, homodimer.

The catalysed reaction is Hydrolysis of Ala-|-Gly bond in repressor LexA.. Functionally, represses a number of genes involved in the response to DNA damage (SOS response), including recA and lexA. In the presence of single-stranded DNA, RecA interacts with LexA causing an autocatalytic cleavage which disrupts the DNA-binding part of LexA, leading to derepression of the SOS regulon and eventually DNA repair. In Bacillus pumilus (strain SAFR-032), this protein is LexA repressor.